The chain runs to 381 residues: Sensor histidine kinase FlgS (381 aa).

Residues 177–381 (HLAHEIRNPV…TFEIKILNAS (205 aa)) form the Histidine kinase domain. Position 180 is a phosphohistidine; by autocatalysis (histidine 180).

In terms of assembly, interacts (via its C-terminal kinase domain) with FlhA (via N-terminus). Autophosphorylated.

The catalysed reaction is ATP + protein L-histidine = ADP + protein N-phospho-L-histidine.. In terms of biological role, member of the two-component regulatory system FlgR/FlgS that induces the transcriptional induction of the genes needed in motility and flagellar biogenesis. Also plays an essential role in bacterial survival at pH 2.5 independently of FlgR. Functions as a sensor protein kinase which is autophosphorylated at a histidine residue and transfers its phosphate group to the conserved aspartic acid residue in the regulatory domain of FlgR. In turn, FlgR functions as a transcriptional regulator initiating transcription from RpoN-dependent promoters. This chain is Sensor histidine kinase FlgS (flgS), found in Helicobacter pylori (strain ATCC 700392 / 26695) (Campylobacter pylori).